The sequence spans 475 residues: 3-isopropylmalate dehydratase large subunit (475 aa).

3 residues coordinate [4Fe-4S] cluster: cysteine 352, cysteine 412, and cysteine 415.

The protein belongs to the aconitase/IPM isomerase family. LeuC type 1 subfamily. Heterodimer of LeuC and LeuD. [4Fe-4S] cluster serves as cofactor.

The enzyme catalyses (2R,3S)-3-isopropylmalate = (2S)-2-isopropylmalate. The protein operates within amino-acid biosynthesis; L-leucine biosynthesis; L-leucine from 3-methyl-2-oxobutanoate: step 2/4. In terms of biological role, catalyzes the isomerization between 2-isopropylmalate and 3-isopropylmalate, via the formation of 2-isopropylmaleate. In Gluconobacter oxydans (strain 621H) (Gluconobacter suboxydans), this protein is 3-isopropylmalate dehydratase large subunit.